A 602-amino-acid chain; its full sequence is RecBCD enzyme subunit RecD (602 aa).

174–181 contacts ATP; it reads GGPGTGKT.

It belongs to the RecD family. In terms of assembly, heterotrimer of RecB, RecC and RecD. All subunits contribute to DNA-binding.

The enzyme catalyses Couples ATP hydrolysis with the unwinding of duplex DNA at the replication fork by translocating in the 5'-3' direction. This creates two antiparallel DNA single strands (ssDNA). The leading ssDNA polymer is the template for DNA polymerase III holoenzyme which synthesizes a continuous strand.. It catalyses the reaction ATP + H2O = ADP + phosphate + H(+). Its function is as follows. A helicase/nuclease that prepares dsDNA breaks (DSB) for recombinational DNA repair. Binds to DSBs and unwinds DNA via a highly rapid and processive ATP-dependent bidirectional helicase activity. Unwinds dsDNA until it encounters a Chi (crossover hotspot instigator) sequence from the 3' direction. Cuts ssDNA a few nucleotides 3' to the Chi site. The properties and activities of the enzyme are changed at Chi. The Chi-altered holoenzyme produces a long 3'-ssDNA overhang and facilitates RecA-binding to the ssDNA for homologous DNA recombination and repair. Holoenzyme degrades any linearized DNA that is unable to undergo homologous recombination. In the holoenzyme this subunit has ssDNA-dependent ATPase and 5'-3' helicase activity. When added to pre-assembled RecBC greatly stimulates nuclease activity and augments holoenzyme processivity. Negatively regulates the RecA-loading ability of RecBCD. The chain is RecBCD enzyme subunit RecD from Buchnera aphidicola subsp. Schizaphis graminum (strain Sg).